We begin with the raw amino-acid sequence, 94 residues long: UPF0768 protein YBL029C-A (94 aa).

It belongs to the UPF0768 family.

Its subcellular location is the cell membrane. The chain is UPF0768 protein YBL029C-A from Saccharomyces cerevisiae (strain ATCC 204508 / S288c) (Baker's yeast).